The following is a 679-amino-acid chain: DNA ligase (679 aa).

Residues Asp32–Asp36, Ser81–Leu82, and Glu115 contribute to the NAD(+) site. Lys117 (N6-AMP-lysine intermediate) is an active-site residue. NAD(+)-binding residues include Arg138, Glu175, Lys293, and Lys317. Cys411, Cys414, Cys429, and Cys434 together coordinate Zn(2+). The BRCT domain maps to Asn601–Thr679.

The protein belongs to the NAD-dependent DNA ligase family. LigA subfamily. The cofactor is Mg(2+). Mn(2+) serves as cofactor.

It catalyses the reaction NAD(+) + (deoxyribonucleotide)n-3'-hydroxyl + 5'-phospho-(deoxyribonucleotide)m = (deoxyribonucleotide)n+m + AMP + beta-nicotinamide D-nucleotide.. Functionally, DNA ligase that catalyzes the formation of phosphodiester linkages between 5'-phosphoryl and 3'-hydroxyl groups in double-stranded DNA using NAD as a coenzyme and as the energy source for the reaction. It is essential for DNA replication and repair of damaged DNA. The polypeptide is DNA ligase (Parasynechococcus marenigrum (strain WH8102)).